The chain runs to 132 residues: Small ribosomal subunit protein uS8c (132 aa).

Belongs to the universal ribosomal protein uS8 family. In terms of assembly, part of the 30S ribosomal subunit.

The protein resides in the plastid. The protein localises to the chloroplast. In terms of biological role, one of the primary rRNA binding proteins, it binds directly to 16S rRNA central domain where it helps coordinate assembly of the platform of the 30S subunit. The chain is Small ribosomal subunit protein uS8c (rps8) from Nandina domestica (Heavenly bamboo).